Reading from the N-terminus, the 427-residue chain is Glutamate-1-semialdehyde 2,1-aminomutase (427 aa).

The residue at position 264 (K264) is an N6-(pyridoxal phosphate)lysine.

The protein belongs to the class-III pyridoxal-phosphate-dependent aminotransferase family. HemL subfamily. As to quaternary structure, homodimer. It depends on pyridoxal 5'-phosphate as a cofactor.

The protein resides in the cytoplasm. It catalyses the reaction (S)-4-amino-5-oxopentanoate = 5-aminolevulinate. It participates in porphyrin-containing compound metabolism; protoporphyrin-IX biosynthesis; 5-aminolevulinate from L-glutamyl-tRNA(Glu): step 2/2. This chain is Glutamate-1-semialdehyde 2,1-aminomutase, found in Clostridium botulinum (strain Eklund 17B / Type B).